Here is a 672-residue protein sequence, read N- to C-terminus: uncharacterized protein (672 aa).

Residues 1-24 (MKTLKVLKIFIIVYISSVSLESFA) form the signal peptide. The next 2 membrane-spanning stretches (helical) occupy residues 226 to 246 (IIGA…ALNK) and 254 to 274 (ITLF…LGPL). The span at 363 to 372 (SNGTSGNNKP) shows a compositional bias: polar residues. The segment at 363–384 (SNGTSGNNKPIPNFDPDGKKDR) is disordered. Transmembrane regions (helical) follow at residues 410 to 430 (IILV…LYFI), 436 to 456 (CMVT…MVLF), 469 to 489 (VCIS…LLIT), and 562 to 582 (VVSI…FYYF). Residues 628 to 646 (HGKSSLGDKPDIGNKRKDG) show a composition bias toward basic and acidic residues. Residues 628–672 (HGKSSLGDKPDIGNKRKDGAQQGEDAVNSSGGEVADLASGSGGGK) are disordered.

Belongs to the TrbL/VirB6 family.

The protein resides in the cell membrane. This is an uncharacterized protein from Rickettsia prowazekii (strain Madrid E).